The sequence spans 52 residues: Large ribosomal subunit protein bL32c (52 aa).

The protein belongs to the bacterial ribosomal protein bL32 family.

The protein resides in the plastid. It localises to the chloroplast. This chain is Large ribosomal subunit protein bL32c, found in Nymphaea alba (White water-lily).